A 371-amino-acid polypeptide reads, in one-letter code: Dual-specificity RNA methyltransferase RlmN (371 aa).

The Proton acceptor role is filled by E86. Residues 105–338 (RHARYTICVS…CTIRQSKGLD (234 aa)) form the Radical SAM core domain. Residues C112 and C343 are joined by a disulfide bond. 3 residues coordinate [4Fe-4S] cluster: C119, C123, and C126. S-adenosyl-L-methionine contacts are provided by residues 169–170 (GE), S201, 224–226 (SLH), and N300. C343 functions as the S-methylcysteine intermediate in the catalytic mechanism. A compositionally biased stretch (polar residues) spans 348–363 (QRSQNLSPSNNNTSKP). The disordered stretch occupies residues 348–371 (QRSQNLSPSNNNTSKPSDIKKSES).

This sequence belongs to the radical SAM superfamily. RlmN family. It depends on [4Fe-4S] cluster as a cofactor.

The protein resides in the cytoplasm. It carries out the reaction adenosine(2503) in 23S rRNA + 2 reduced [2Fe-2S]-[ferredoxin] + 2 S-adenosyl-L-methionine = 2-methyladenosine(2503) in 23S rRNA + 5'-deoxyadenosine + L-methionine + 2 oxidized [2Fe-2S]-[ferredoxin] + S-adenosyl-L-homocysteine. It catalyses the reaction adenosine(37) in tRNA + 2 reduced [2Fe-2S]-[ferredoxin] + 2 S-adenosyl-L-methionine = 2-methyladenosine(37) in tRNA + 5'-deoxyadenosine + L-methionine + 2 oxidized [2Fe-2S]-[ferredoxin] + S-adenosyl-L-homocysteine. In terms of biological role, specifically methylates position 2 of adenine 2503 in 23S rRNA and position 2 of adenine 37 in tRNAs. m2A2503 modification seems to play a crucial role in the proofreading step occurring at the peptidyl transferase center and thus would serve to optimize ribosomal fidelity. This chain is Dual-specificity RNA methyltransferase RlmN, found in Campylobacter curvus (strain 525.92).